The chain runs to 110 residues: HIT-like protein CPn_0488/CP_0266/CPj0488/CpB0508 (110 aa).

An HIT domain is found at 3–110 (VFKQIIDGLI…LGGRPLGAIA (108 aa)). Positions 95–99 (HLHIH) match the Histidine triad motif motif.

This Chlamydia pneumoniae (Chlamydophila pneumoniae) protein is HIT-like protein CPn_0488/CP_0266/CPj0488/CpB0508.